Here is a 1823-residue protein sequence, read N- to C-terminus: Laminin subunit alpha-4 (1823 aa).

The signal sequence occupies residues 1-24; that stretch reads MALSSAWRSVLPLWLLWSAACSRA. A glycan (O-linked (Xyl...) (chondroitin sulfate) serine) is linked at serine 39. 12 disulfides stabilise this stretch: cysteine 82/cysteine 91, cysteine 84/cysteine 98, cysteine 101/cysteine 110, cysteine 113/cysteine 129, cysteine 132/cysteine 146, cysteine 134/cysteine 155, cysteine 157/cysteine 166, cysteine 169/cysteine 184, cysteine 187/cysteine 202, cysteine 189/cysteine 209, cysteine 212/cysteine 221, and cysteine 224/cysteine 238. Laminin EGF-like domains lie at 82–131, 132–186, and 187–240; these read CDCN…FCQP, CPCP…TCKK, and CDCS…NCAV. N-linked (GlcNAc...) asparagine glycosylation is present at asparagine 104. N-linked (GlcNAc...) asparagine glycosylation occurs at asparagine 215. The Laminin EGF-like 4; truncated domain maps to 241-255; the sequence is CNCGGGPCDSVTGEC. Positions 256 to 832 are domain II and I; the sequence is LEEGFEPPTG…AQTRSVASKI (577 aa). A glycan (N-linked (GlcNAc...) asparagine) is linked at asparagine 315. Residues 320–403 are a coiled coil; that stretch reads LLKTKLSERE…KIQEINNKML (84 aa). An N-linked (GlcNAc...) asparagine glycan is attached at asparagine 465. A coiled-coil region spans residues 473 to 528; that stretch reads VVLEQLDDYNAKLSDLQEALDQALNYVRDAEDMNRATAARQRDHEKQQERVREQME. N-linked (GlcNAc...) asparagine glycosylation is found at asparagine 531, asparagine 557, asparagine 578, asparagine 581, asparagine 638, and asparagine 646. Residues 581–614 are a coiled coil; the sequence is NLSHDLVQEAIDHAQDLQQEANELSRKLHSSDMN. Residues 662 to 724 are a coiled coil; it reads IIYHKDESEN…AVKQLQAAER (63 aa). The Cell attachment site motif lies at 724-726; the sequence is RGD. 5 N-linked (GlcNAc...) asparagine glycosylation sites follow: asparagine 742, asparagine 758, asparagine 761, asparagine 787, and asparagine 810. A coiled-coil region spans residues 777–806; sequence AVNSARDAVRNLTEVVPQLLDQLRTVEQKR. 3 consecutive Laminin G-like domains span residues 833 to 1035, 1047 to 1227, and 1234 to 1402; these read QVSM…SVPC, AASY…GYGC, and SRRA…LYEC. Cysteine 1005 and cysteine 1035 are disulfide-bonded. A glycan (N-linked (GlcNAc...) asparagine) is linked at asparagine 1093. A disulfide bond links cysteine 1201 and cysteine 1227. 2 N-linked (GlcNAc...) asparagine glycosylation sites follow: asparagine 1288 and asparagine 1366. Cysteine 1370 and cysteine 1402 are oxidised to a cystine. N-linked (GlcNAc...) asparagine glycosylation is present at asparagine 1418. The tract at residues 1419-1440 is disordered; sequence LSKPKASQNKKGGKSKDAPSWD. Laminin G-like domains lie at 1469-1640 and 1647-1820; these read AYQY…VTPC and TGTY…INSC. 2 disulfide bridges follow: cysteine 1617-cysteine 1640 and cysteine 1792-cysteine 1820.

Laminin is a complex glycoprotein, consisting of three different polypeptide chains (alpha, beta, gamma), which are bound to each other by disulfide bonds into a cross-shaped molecule comprising one long and three short arms with globules at each end. Alpha-4 is a subunit of laminin-8 (laminin-411), laminin-9 (laminin-421) and laminin-14 (laminin-423). Detected in placenta (at protein level). Detected in fibroblasts and urine (at protein level). In adult, strong expression in heart, lung, ovary small and large intestines, placenta, liver; weak or no expression in skeletal muscle, kidney, pancreas, testis, prostate, brain. High expression in fetal lung and kidney. Expression in fetal and newborn tissues is observed in certain mesenchymal cells in tissues such as smooth muscle and dermis.

The protein resides in the secreted. It is found in the extracellular space. It localises to the extracellular matrix. Its subcellular location is the basement membrane. Functionally, binding to cells via a high affinity receptor, laminin is thought to mediate the attachment, migration and organization of cells into tissues during embryonic development by interacting with other extracellular matrix components. This is Laminin subunit alpha-4 (LAMA4) from Homo sapiens (Human).